Here is a 274-residue protein sequence, read N- to C-terminus: THAP domain-containing protein 8 (274 aa).

Residues 1 to 85 (MPKYCRAPNC…LRPDAVPSIF (85 aa)) form a THAP-type zinc finger. The interval 83-121 (SIFSRGPPAKSQRRTRSTQKPVSPPPPLQKNTPLPQSPA) is disordered.

This Homo sapiens (Human) protein is THAP domain-containing protein 8 (THAP8).